The chain runs to 204 residues: Refilin-A (204 aa).

The tract at residues M1 to T52 is disordered. The segment covering D12 to L21 has biased composition (basic and acidic residues). Positions G28 to P38 are enriched in pro residues. R151 carries the asymmetric dimethylarginine modification.

Belongs to the Refilin family. Interacts with FLNA and FLNB. Detected in various tissues, with highest expression in lung, followed by spleen.

The protein resides in the cytoplasm. Its subcellular location is the cytoskeleton. Involved in the regulation of the perinuclear actin network and nuclear shape through interaction with filamins. Plays an essential role in the formation of cartilaginous skeletal elements. The polypeptide is Refilin-A (Rflna) (Mus musculus (Mouse)).